Consider the following 1918-residue polypeptide: NFX1-type zinc finger-containing protein 1 (1918 aa).

Residues 1 to 12 (MEERRPHLDARP) show a composition bias toward basic and acidic residues. 2 disordered regions span residues 1-58 (MEER…RANN) and 75-140 (RNPH…QPQQ). Residues 30 to 42 (RARNQANNPPANA) are compositionally biased toward low complexity. The span at 82-105 (RNQEGHASDEARDQRHDQENDTRW) shows a compositional bias: basic and acidic residues. A compositionally biased stretch (polar residues) spans 120 to 129 (SNDNFQQWRT). Residues 286-313 (DIEEETEKNLEKVQTIIEHLQEKRREGT) are a coiled coil. Disordered regions lie at residues 796–819 (SVSP…GEEE) and 876–896 (TAAG…QKKK). The segment covering 809 to 819 (EGDEEEEGEEE) has biased composition (acidic residues). Polar residues predominate over residues 877-887 (AAGQEQATGEW). Positions 886–967 (EWQTQRNQKK…TSAERMAELR (82 aa)) form a coiled coil. NF-X1-type zinc fingers lie at residues 1298–1320 (CGHV…QCMK), 1330–1346 (GHRC…PCQV), 1382–1400 (CGHR…LCSE), 1441–1463 (CGHP…RCQQ), 1471–1488 (CSHK…PCQR), and 1546–1564 (CGHP…KCRI). The stretch at 1741–1820 (LAKKRLSFTS…EKMEALKATL (80 aa)) forms a coiled coil. The RZ-type zinc-finger motif lies at 1827 to 1898 (ISEEERVQIV…LASEMDGAQH (72 aa)). Positions 1849, 1853, 1869, and 1872 each coordinate Zn(2+).

The protein belongs to the ZNFX1 family. In terms of assembly, interacts with MAVS. As to expression, widely expressed.

The protein localises to the mitochondrion outer membrane. The protein resides in the cytoplasm. It localises to the stress granule. Its function is as follows. RNA-binding protein that initiates the antiviral response and is required to restrict the replication of RNA viruses. Acts as a double-stranded RNA (dsRNA) sensor that recognizes viral RNA and then interacts with MAVS to initiate the type I interferon response. Also required for immunity against some bacteria, such as mycobacteria. This Homo sapiens (Human) protein is NFX1-type zinc finger-containing protein 1.